Reading from the N-terminus, the 553-residue chain is Aminotransferase FUM8 (553 aa).

Positions 1 to 25 (MSPAPAILALRRVYNFCLLVDEAHG) are cleaved as a signal peptide. N-linked (GlcNAc...) asparagine glycosylation occurs at Asn-480.

This sequence belongs to the class-II pyridoxal-phosphate-dependent aminotransferase family. BioF subfamily. Requires pyridoxal 5'-phosphate as cofactor.

It localises to the endoplasmic reticulum. It functions in the pathway mycotoxin biosynthesis. Functionally, aminotransferase; part of the gene cluster that mediates the biosynthesis of fumonisins B1 (FB1), B2 (FB2), B3 (FB3), and B4 (FB4), which are carcinogenic mycotoxins. Within the pathway, FUM8 catalyzes the release of the C-18 polyketide chain from the highly reducing polyketide synthase FUM1 by a nucleophilic attack of a carbanion, which is derived from R-carbon of alanine by decarboxylation, on the carbonyl carbon of polyketide acyl chain. The biosynthesis starts with the FUM1-catalyzed carbon chain assembly from one molecule of acetyl-CoA, eight molecules of malonyl-CoA, and two molecules of methionine (in S-adenosyl form). The C18 polyketide chain is released from the enzyme by a nucleophilic attack of a carbanion, which is derived from R-carbon of alanine by decarboxylation, on the carbonyl carbon of polyketide acyl chain. This step is catalyzed by the pyridoxal 5'-phosphate-dependent aminoacyl transferase FUM8. The resultant 3-keto intermediate is then stereospecifically reduced to a 3-hydroxyl product by reductase FUM13. Subsequent oxidations at C-10 by the cytochrome P450 monooxygenase FUM2, C-14 and C-15 by FUM6, FUM12 or FUM15, tricarballylic esterification of the hydroxyl groups on C-14 and C-15 by acyltransferase FUM14, and C-5 hydroxylation by 2-keto-glutarate-dependent dioxygenase FUM3 furnish the biosynthesis of fumonisins. The tricarballylic moieties are most likely derived from the citric acid cycle, and their addition to the carbon backbone may involve FUM7, FUM10, FUM11 and FUM14. The sequence is that of Aminotransferase FUM8 from Gibberella moniliformis (strain M3125 / FGSC 7600) (Maize ear and stalk rot fungus).